Consider the following 251-residue polypeptide: UPF0309 protein GK1441 (251 aa).

Positions valine 31 to proline 214 constitute an SIS domain.

Belongs to the UPF0309 family.

The protein is UPF0309 protein GK1441 of Geobacillus kaustophilus (strain HTA426).